A 342-amino-acid polypeptide reads, in one-letter code: 4-hydroxy-2-oxovalerate aldolase (342 aa).

One can recognise a Pyruvate carboxyltransferase domain in the interval 7–257 (VWITEVALRD…KTGIDLYKMM (251 aa)). Residue 15 to 16 (RD) participates in substrate binding. Position 16 (D16) interacts with Mn(2+). H19 (proton acceptor) is an active-site residue. Substrate is bound by residues S169 and H196. The Mn(2+) site is built by H196 and H198. Y287 is a substrate binding site.

The protein belongs to the 4-hydroxy-2-oxovalerate aldolase family.

It catalyses the reaction (S)-4-hydroxy-2-oxopentanoate = acetaldehyde + pyruvate. This is 4-hydroxy-2-oxovalerate aldolase (pheE) from Geobacillus stearothermophilus (Bacillus stearothermophilus).